Reading from the N-terminus, the 508-residue chain is Endo-4-O-sulfatase (508 aa).

Position 84 is a 3-oxoalanine (Ser) (Ser-84).

It belongs to the sulfatase family. Post-translationally, the conversion to 3-oxoalanine (also known as C-formylglycine, FGly), of a serine or cysteine residue in prokaryotes and of a cysteine residue in eukaryotes, is critical for catalytic activity.

Its function is as follows. Endosulfatase involved in the degradation of the glycosaminoglycans (GAGs) chondroitin sulfate (CS) and dermatan sulfate (DS). Efficiently hydrolyzes sulfate groups from a broad range of substrate size, including disaccharide to high molecular weight CS and DS polymers. Has a strict specificity for the 4-O-sulfate groups of galactosamine. GAG-specific sulfatases play a key role in the persistence of the major human gut symbiont B.thetaiotaomicron in the host gastrointestinal tract. The polypeptide is Endo-4-O-sulfatase (Bacteroides thetaiotaomicron (strain ATCC 29148 / DSM 2079 / JCM 5827 / CCUG 10774 / NCTC 10582 / VPI-5482 / E50)).